Here is a 465-residue protein sequence, read N- to C-terminus: Cysteine--tRNA ligase (465 aa).

Cys27 is a Zn(2+) binding site. A 'HIGH' region motif is present at residues 29 to 39 (PTVYDDAHLGH). Zn(2+) contacts are provided by Cys207, His237, and Glu241. A 'KMSKS' region motif is present at residues 269–273 (KMSKS). Lys272 lines the ATP pocket.

This sequence belongs to the class-I aminoacyl-tRNA synthetase family. Monomer. Requires Zn(2+) as cofactor.

Its subcellular location is the cytoplasm. The catalysed reaction is tRNA(Cys) + L-cysteine + ATP = L-cysteinyl-tRNA(Cys) + AMP + diphosphate. This Helicobacter pylori (strain J99 / ATCC 700824) (Campylobacter pylori J99) protein is Cysteine--tRNA ligase (cysS).